The chain runs to 823 residues: Ankyrin repeat domain-containing protein 20A1 (823 aa).

ANK repeat units follow at residues Gln66 to Val95, Glu99 to Leu128, Tyr132 to Ala161, Asp165 to Ala194, and Leu198 to Ala227. Disordered regions lie at residues Val301 to Asp343 and Val355 to Asn402. Residues Gln372–Gln384 are compositionally biased toward basic and acidic residues. 3 coiled-coil regions span residues Lys431–Glu480, Glu565–Thr724, and Leu776–Glu805.

The polypeptide is Ankyrin repeat domain-containing protein 20A1 (ANKRD20A1) (Homo sapiens (Human)).